The sequence spans 276 residues: MRAKQREIIDALKVKPTIDPATEIRRSVDFLKAYLQRYDFMKTLVLGISGGQDSTLTGLLCEQAVTELRQETGDNDYRFIAVRLPYGEQADEDDAMMAIDFMDADEVQRVNIKPATDAMIQAVETSGKPISDFNKGNVKARQRMIAQYAIAGARSGAVVGTDHAAEAVTGFYTKYGDGATDICPIWRLDKRQGAAMLAQLGAPEHLYKKVPTADLEDDRPALPDEAALGVRYEDIDDYLEGRSVSEAAASRIEDWYAKTAHKRHLPVNVYDTFWQE.

47 to 54 (GISGGQDS) contacts ATP. Aspartate 53 contributes to the Mg(2+) binding site. Position 141 (arginine 141) interacts with deamido-NAD(+). Residue threonine 161 coordinates ATP. Glutamate 166 lines the Mg(2+) pocket. 2 residues coordinate deamido-NAD(+): lysine 174 and aspartate 181. The ATP site is built by lysine 190 and threonine 212. 261–262 (HK) is a deamido-NAD(+) binding site.

It belongs to the NAD synthetase family. Homodimer.

It carries out the reaction deamido-NAD(+) + NH4(+) + ATP = AMP + diphosphate + NAD(+) + H(+). The protein operates within cofactor biosynthesis; NAD(+) biosynthesis; NAD(+) from deamido-NAD(+) (ammonia route): step 1/1. Functionally, catalyzes the ATP-dependent amidation of deamido-NAD to form NAD. Uses ammonia as a nitrogen source. The sequence is that of NH(3)-dependent NAD(+) synthetase from Levilactobacillus brevis (strain ATCC 367 / BCRC 12310 / CIP 105137 / JCM 1170 / LMG 11437 / NCIMB 947 / NCTC 947) (Lactobacillus brevis).